We begin with the raw amino-acid sequence, 309 residues long: HPr kinase/phosphorylase (309 aa).

Residues His-138 and Lys-159 contribute to the active site. 153-160 contacts ATP; sequence GQSGVGKS. Ser-160 is a binding site for Mg(2+). Asp-177 serves as the catalytic Proton acceptor; for phosphorylation activity. Proton donor; for dephosphorylation activity. An important for the catalytic mechanism of both phosphorylation and dephosphorylation region spans residues 201-210; it reads LEIRGLGIIN. Glu-202 lines the Mg(2+) pocket. The active site involves Arg-243. The tract at residues 264 to 269 is important for the catalytic mechanism of dephosphorylation; the sequence is PVRPGR.

Belongs to the HPrK/P family. Homohexamer. It depends on Mg(2+) as a cofactor.

It carries out the reaction [HPr protein]-L-serine + ATP = [HPr protein]-O-phospho-L-serine + ADP + H(+). It catalyses the reaction [HPr protein]-O-phospho-L-serine + phosphate + H(+) = [HPr protein]-L-serine + diphosphate. Its function is as follows. Catalyzes the ATP- as well as the pyrophosphate-dependent phosphorylation of a specific serine residue in HPr, a phosphocarrier protein of the phosphoenolpyruvate-dependent sugar phosphotransferase system (PTS). HprK/P also catalyzes the pyrophosphate-producing, inorganic phosphate-dependent dephosphorylation (phosphorolysis) of seryl-phosphorylated HPr (P-Ser-HPr). The two antagonistic activities of HprK/P are regulated by several intracellular metabolites, which change their concentration in response to the absence or presence of rapidly metabolisable carbon sources (glucose, fructose, etc.) in the growth medium. Also phosphorylates/dephosphorylates the HPr-like catabolite repression protein crh on a specific serine residue. Therefore, by controlling the phosphorylation state of HPr and crh, HPrK/P is a sensor enzyme that plays a major role in the regulation of carbon metabolism and sugar transport: it mediates carbon catabolite repression (CCR), and regulates PTS-catalyzed carbohydrate uptake and inducer exclusion. This is HPr kinase/phosphorylase from Bacillus cytotoxicus (strain DSM 22905 / CIP 110041 / 391-98 / NVH 391-98).